The chain runs to 664 residues: E3 ubiquitin-protein ligase CHFR (664 aa).

The FHA domain maps to 38 to 89 (WTIGRRRGCDLSFPSNKLVSGDHCKLTVDEISGEVTLEDTSTNGTVINKLQV). 2 disordered regions span residues 170–220 (LEEP…GRSS) and 245–264 (ESKDHEELEPAKKKMKGDGE). Positions 174-202 (QPSTSTSDLLPTASTSSTEPELTSAGQKH) are enriched in polar residues. Positions 203-215 (SSSSGPGNTSISP) are enriched in low complexity. Basic and acidic residues predominate over residues 245–263 (ESKDHEELEPAKKKMKGDG). Residues 303 to 342 (CIICQDLLHDCVSLQPCMHTFCAACYSGWMERSSLCPTCR) form an RING-type zinc finger. Position 385 is a phosphothreonine (T385). The interval 389–413 (LQPKVRRSFSDEEGSSEDLLELSDV) is disordered. Positions 399-413 (DEEGSSEDLLELSDV) are enriched in acidic residues. The PBZ-type zinc finger occupies 633–655 (PDCYWGRNCRTQVKAHHAMKFNH).

It belongs to the CHFR family. As to quaternary structure, interacts with HDAC1 and HDAC2. Interacts with PML (with sumoylated form of PML). Post-translationally, poly-ADP-ribosylated. In addition to binding non covalently poly(ADP-ribose) via its PBZ-type zinc finger, the protein is also covalently poly-ADP-ribosylated by PARP1. Autoubiquitinated; may regulate its cellular level. In terms of processing, phosphorylated by PKB. Phosphorylation may affect its E3 ligase activity.

The protein localises to the nucleus. It is found in the PML body. The catalysed reaction is S-ubiquitinyl-[E2 ubiquitin-conjugating enzyme]-L-cysteine + [acceptor protein]-L-lysine = [E2 ubiquitin-conjugating enzyme]-L-cysteine + N(6)-ubiquitinyl-[acceptor protein]-L-lysine.. The protein operates within protein modification; protein ubiquitination. Functionally, E3 ubiquitin-protein ligase that functions in the antephase checkpoint by actively delaying passage into mitosis in response to microtubule poisons. Acts in early prophase before chromosome condensation, when the centrosome move apart from each other along the periphery of the nucleus. Probably involved in signaling the presence of mitotic stress caused by microtubule poisons by mediating the 'Lys-48'-linked ubiquitination of target proteins, leading to their degradation by the proteasome. Promotes the ubiquitination and subsequent degradation of AURKA and PLK1. Probably acts as a tumor suppressor, possibly by mediating the polyubiquitination of HDAC1, leading to its degradation. May also promote the formation of 'Lys-63'-linked polyubiquitin chains and functions with the specific ubiquitin-conjugating UBC13-MMS2 (UBE2N-UBE2V2) heterodimer. Substrates that are polyubiquitinated at 'Lys-63' are usually not targeted for degradation, but are rather involved in signaling cellular stress. In Mus musculus (Mouse), this protein is E3 ubiquitin-protein ligase CHFR (Chfr).